The sequence spans 100 residues: Large ribosomal subunit protein uL23 (100 aa).

The protein belongs to the universal ribosomal protein uL23 family. As to quaternary structure, part of the 50S ribosomal subunit. Contacts protein L29, and trigger factor when it is bound to the ribosome.

In terms of biological role, one of the early assembly proteins it binds 23S rRNA. One of the proteins that surrounds the polypeptide exit tunnel on the outside of the ribosome. Forms the main docking site for trigger factor binding to the ribosome. The protein is Large ribosomal subunit protein uL23 of Aeromonas salmonicida (strain A449).